Here is a 205-residue protein sequence, read N- to C-terminus: Imidazole glycerol phosphate synthase subunit HisH (205 aa).

A Glutamine amidotransferase type-1 domain is found at 1-205; sequence MIALVDYGGG…FFKMALGDKK (205 aa). Residue Cys79 is the Nucleophile of the active site. Active-site residues include His181 and Glu183.

Heterodimer of HisH and HisF.

The protein resides in the cytoplasm. The catalysed reaction is 5-[(5-phospho-1-deoxy-D-ribulos-1-ylimino)methylamino]-1-(5-phospho-beta-D-ribosyl)imidazole-4-carboxamide + L-glutamine = D-erythro-1-(imidazol-4-yl)glycerol 3-phosphate + 5-amino-1-(5-phospho-beta-D-ribosyl)imidazole-4-carboxamide + L-glutamate + H(+). It catalyses the reaction L-glutamine + H2O = L-glutamate + NH4(+). It participates in amino-acid biosynthesis; L-histidine biosynthesis; L-histidine from 5-phospho-alpha-D-ribose 1-diphosphate: step 5/9. Its function is as follows. IGPS catalyzes the conversion of PRFAR and glutamine to IGP, AICAR and glutamate. The HisH subunit catalyzes the hydrolysis of glutamine to glutamate and ammonia as part of the synthesis of IGP and AICAR. The resulting ammonia molecule is channeled to the active site of HisF. In Dehalococcoides mccartyi (strain ATCC BAA-2266 / KCTC 15142 / 195) (Dehalococcoides ethenogenes (strain 195)), this protein is Imidazole glycerol phosphate synthase subunit HisH.